The chain runs to 131 residues: Large-conductance mechanosensitive channel (131 aa).

3 helical membrane-spanning segments follow: residues 8 to 28 (FAIRGNVIDLAVGVIIGGAFG), 30 to 50 (IVSSLVNDIIMPLVGLILGGI), and 67 to 87 (GAFIQTVVDFLIIAFSIFLFV).

This sequence belongs to the MscL family. In terms of assembly, homopentamer.

It localises to the cell membrane. Functionally, channel that opens in response to stretch forces in the membrane lipid bilayer. May participate in the regulation of osmotic pressure changes within the cell. The polypeptide is Large-conductance mechanosensitive channel (Geobacillus kaustophilus (strain HTA426)).